The following is a 216-amino-acid chain: tRNA (guanine-N(7)-)-methyltransferase (216 aa).

S-adenosyl-L-methionine-binding residues include Glu44, Glu69, Asn97, and Asp119. Asp119 is an active-site residue. Residues Lys123, Asp155, and Thr192–Glu195 contribute to the substrate site.

It belongs to the class I-like SAM-binding methyltransferase superfamily. TrmB family.

It carries out the reaction guanosine(46) in tRNA + S-adenosyl-L-methionine = N(7)-methylguanosine(46) in tRNA + S-adenosyl-L-homocysteine. It participates in tRNA modification; N(7)-methylguanine-tRNA biosynthesis. Its function is as follows. Catalyzes the formation of N(7)-methylguanine at position 46 (m7G46) in tRNA. The sequence is that of tRNA (guanine-N(7)-)-methyltransferase from Lysinibacillus sphaericus (strain C3-41).